We begin with the raw amino-acid sequence, 480 residues long: Adenosylmethionine-8-amino-7-oxononanoate aminotransferase (480 aa).

126 to 127 (GS) contacts pyridoxal 5'-phosphate. Tyr-160 lines the substrate pocket. A pyridoxal 5'-phosphate-binding site is contributed by Asp-270. Lys-314 bears the N6-(pyridoxal phosphate)lysine mark. Gly-350 is a substrate binding site. 351 to 352 (PT) provides a ligand contact to pyridoxal 5'-phosphate. Residue Arg-441 participates in substrate binding.

The protein belongs to the class-III pyridoxal-phosphate-dependent aminotransferase family. BioA subfamily. The cofactor is pyridoxal 5'-phosphate.

It catalyses the reaction (8S)-8-amino-7-oxononanoate + S-adenosyl-L-methionine = S-adenosyl-4-methylsulfanyl-2-oxobutanoate + (7R,8S)-7,8-diammoniononanoate. It functions in the pathway cofactor biosynthesis; biotin biosynthesis; 7,8-diaminononanoate from 8-amino-7-oxononanoate (SAM route): step 1/1. Catalyzes the transfer of the alpha-amino group from S-adenosyl-L-methionine (SAM) to 7-keto-8-aminopelargonic acid (KAPA) to form 7,8-diaminopelargonic acid (DAPA). It is the only aminotransferase known to utilize SAM as an amino donor. This chain is Adenosylmethionine-8-amino-7-oxononanoate aminotransferase, found in Saccharomyces cerevisiae (strain ATCC 204508 / S288c) (Baker's yeast).